The primary structure comprises 28 residues: MSGGYSNGFALLVVLFILLIIVGAAYIY.

The chain crosses the membrane as a helical span at residues G8–Y28.

This sequence belongs to the SscA family.

Its subcellular location is the spore coat. The protein localises to the membrane. Functionally, spore protein involved in the assembly of several components of the spore coat, including CotB, CotG and CotH, and in spore germination. This is Small spore coat assembly protein A from Bacillus subtilis (strain 168).